We begin with the raw amino-acid sequence, 677 residues long: DNA ligase (677 aa).

NAD(+) contacts are provided by residues 43–47 (DHVYD), 92–93 (SM), and E122. Catalysis depends on K124, which acts as the N6-AMP-lysine intermediate. R145, E179, K295, and K319 together coordinate NAD(+). Residues C413, C416, C431, and C436 each coordinate Zn(2+). A BRCT domain is found at 599–677 (TSDSYFNGKT…EADLDNYLAQ (79 aa)).

This sequence belongs to the NAD-dependent DNA ligase family. LigA subfamily. Requires Mg(2+) as cofactor. The cofactor is Mn(2+).

It carries out the reaction NAD(+) + (deoxyribonucleotide)n-3'-hydroxyl + 5'-phospho-(deoxyribonucleotide)m = (deoxyribonucleotide)n+m + AMP + beta-nicotinamide D-nucleotide.. Its function is as follows. DNA ligase that catalyzes the formation of phosphodiester linkages between 5'-phosphoryl and 3'-hydroxyl groups in double-stranded DNA using NAD as a coenzyme and as the energy source for the reaction. It is essential for DNA replication and repair of damaged DNA. The chain is DNA ligase from Latilactobacillus sakei subsp. sakei (strain 23K) (Lactobacillus sakei subsp. sakei).